Reading from the N-terminus, the 3582-residue chain is Ubiquitin carboxyl-terminal hydrolase 34 (3582 aa).

4 positions are modified to phosphoserine: Ser352, Ser486, Ser487, and Ser490. Disordered stretches follow at residues 503-533 (EEEELRRAAPSPWSPAASPQSSDNSDTHQSG), 551-670 (QQRL…ELRN), 682-705 (GESQGTSERNGTNSGTGKDLVFNT), 775-801 (HHHHHHHHHHHHHHHHHHHHHHHDGHM), and 1496-1515 (TGSYSDLYPDSDDSSEDQVE). Residues 510-524 (AAPSPWSPAASPQSS) are compositionally biased toward low complexity. Polar residues predominate over residues 560-570 (SMQGSSDETAN). Residues 571-590 (SGEDGSSGPGSSSGHSDGSS) are compositionally biased toward low complexity. Over residues 591-609 (NEVNSSHASQSAGSPGSEV) the composition is skewed to polar residues. Acidic residues predominate over residues 610-653 (QSEDIADIEALKEEEEEEEEEEEEEEEEDDEEEEDEEEDDDDDD). Over residues 684–697 (SQGTSERNGTNSGT) the composition is skewed to polar residues. Residues 775–798 (HHHHHHHHHHHHHHHHHHHHHHHD) show a composition bias toward basic residues. The segment covering 1504-1514 (PDSDDSSEDQV) has biased composition (acidic residues). Ser1506 carries the post-translational modification Phosphoserine. The region spanning 1931 to 2276 (VGLTNLGATC…SAYMLFYKRM (346 aa)) is the USP domain. The Nucleophile role is filled by Cys1940. His2201 functions as the Proton acceptor in the catalytic mechanism. The residue at position 2525 (Ser2525) is a Phosphoserine. The segment at 3369–3484 (SLQEQEAKER…QSNNGRFDDC (116 aa)) is disordered. Basic and acidic residues predominate over residues 3373–3384 (QEAKERKTKDDE). Phosphoserine is present on residues Ser3395 and Ser3396. A Phosphothreonine modification is found at Thr3418. Phosphoserine occurs at positions 3423 and 3443. Basic and acidic residues predominate over residues 3463–3484 (DGSHIRSQHAEEQSNNGRFDDC). Ser3539 is modified (phosphoserine).

Belongs to the peptidase C19 family. Interacts with AXIN1 and AXIN2.

It catalyses the reaction Thiol-dependent hydrolysis of ester, thioester, amide, peptide and isopeptide bonds formed by the C-terminal Gly of ubiquitin (a 76-residue protein attached to proteins as an intracellular targeting signal).. Ubiquitin hydrolase that can remove conjugated ubiquitin from AXIN1 and AXIN2, thereby acting as a regulator of Wnt signaling pathway. Acts as an activator of the Wnt signaling pathway downstream of the beta-catenin destruction complex by deubiquitinating and stabilizing AXIN1 and AXIN2, leading to promote nuclear accumulation of AXIN1 and AXIN2 and positively regulate beta-catenin (CTNBB1)-mediated transcription. Recognizes and hydrolyzes the peptide bond at the C-terminal Gly of ubiquitin. Involved in the processing of poly-ubiquitin precursors as well as that of ubiquitinated proteins. This chain is Ubiquitin carboxyl-terminal hydrolase 34 (Usp34), found in Mus musculus (Mouse).